A 745-amino-acid chain; its full sequence is 5-methyltetrahydropteroyltriglutamate--homocysteine methyltransferase (745 aa).

5-methyltetrahydropteroyltri-L-glutamate is bound by residues Lys19 and Asn115. L-homocysteine-binding positions include 420-422 (IGS) and Glu473. L-methionine contacts are provided by residues 420–422 (IGS) and Glu473. 5-methyltetrahydropteroyltri-L-glutamate is bound by residues Asp478, Tyr501, 504–505 (RA), and Trp550. Asp588 provides a ligand contact to L-homocysteine. L-methionine is bound at residue Asp588. Zn(2+) is bound by residues His630, Cys632, and Glu654. His683 (proton donor) is an active-site residue. Cys715 is a binding site for Zn(2+).

The protein belongs to the vitamin-B12 independent methionine synthase family. Zn(2+) serves as cofactor.

It carries out the reaction 5-methyltetrahydropteroyltri-L-glutamate + L-homocysteine = tetrahydropteroyltri-L-glutamate + L-methionine. Its pathway is amino-acid biosynthesis; L-methionine biosynthesis via de novo pathway; L-methionine from L-homocysteine (MetE route): step 1/1. Catalyzes the transfer of a methyl group from 5-methyltetrahydrofolate to homocysteine resulting in methionine formation. This chain is 5-methyltetrahydropteroyltriglutamate--homocysteine methyltransferase, found in Streptococcus mutans serotype c (strain ATCC 700610 / UA159).